A 509-amino-acid chain; its full sequence is Putative cytochrome P450 CYP13A8 (509 aa).

Cys-455 is a heme binding site.

This sequence belongs to the cytochrome P450 family. Heme serves as cofactor.

Functionally, cytochromes P450 are a group of heme-thiolate monooxygenases. They oxidize a variety of structurally unrelated compounds, including steroids, fatty acids, and xenobiotics. In Caenorhabditis elegans, this protein is Putative cytochrome P450 CYP13A8 (cyp-13A8).